Consider the following 978-residue polypeptide: Tyrosine-protein kinase transforming protein fms (978 aa).

The Extracellular portion of the chain corresponds to Arg1–Glu543. Ig-like C2-type domains are found at residues Pro55–Tyr134, Pro141–Lys231, Pro236–Glu331, Ala333–Arg431, and Pro434–Ser533. A disulfide bond links Cys76 and Cys118. Residues Asn79, Asn107, Asn128, Asn187, Asn309, Asn320, Asn336, Asn369, Asn444, Asn511, and Asn524 are each glycosylated (N-linked (GlcNAc...) asparagine; by host). 2 cysteine pairs are disulfide-bonded: Cys161/Cys211 and Cys258/Cys312. The cysteines at positions 451 and 516 are disulfide-linked. A helical transmembrane segment spans residues Leu544–Leu568. The Cytoplasmic segment spans residues Tyr569–Arg978. The Protein kinase domain occupies Leu613–Leu942. ATP is bound by residues Leu619–Val627 and Lys647. Residue Asp810 is the Proton acceptor of the active site. Position 841 is a phosphotyrosine; by autocatalysis (Tyr841). Residues Val952 to Arg978 form a disordered region. The segment covering Leu958–Pro969 has biased composition (low complexity). Thr973 is subject to Phosphothreonine.

The protein belongs to the protein kinase superfamily. Tyr protein kinase family. CSF-1/PDGF receptor subfamily.

It localises to the membrane. The enzyme catalyses L-tyrosyl-[protein] + ATP = O-phospho-L-tyrosyl-[protein] + ADP + H(+). Truncated version of the receptor for colony-stimulating factor 1 (CSF-1). The protein is Tyrosine-protein kinase transforming protein fms (V-FMS) of Felidae (cat family).